Here is a 387-residue protein sequence, read N- to C-terminus: Probable peptidoglycan glycosyltransferase FtsW (387 aa).

9 helical membrane-spanning segments follow: residues 19–39, 61–81, 86–106, 118–138, 161–181, 199–219, 286–306, 320–340, and 352–372; these read LDFS…VMVA, ITFL…PMSV, SGLL…PGIG, LGPF…VYFA, VLLI…SVVI, FLLL…ASPY, FIGA…LVIL, YVVF…MGVA, and PFIS…ALVF.

The protein belongs to the SEDS family. FtsW subfamily.

It is found in the cell inner membrane. The enzyme catalyses [GlcNAc-(1-&gt;4)-Mur2Ac(oyl-L-Ala-gamma-D-Glu-L-Lys-D-Ala-D-Ala)](n)-di-trans,octa-cis-undecaprenyl diphosphate + beta-D-GlcNAc-(1-&gt;4)-Mur2Ac(oyl-L-Ala-gamma-D-Glu-L-Lys-D-Ala-D-Ala)-di-trans,octa-cis-undecaprenyl diphosphate = [GlcNAc-(1-&gt;4)-Mur2Ac(oyl-L-Ala-gamma-D-Glu-L-Lys-D-Ala-D-Ala)](n+1)-di-trans,octa-cis-undecaprenyl diphosphate + di-trans,octa-cis-undecaprenyl diphosphate + H(+). Its pathway is cell wall biogenesis; peptidoglycan biosynthesis. In terms of biological role, peptidoglycan polymerase that is essential for cell division. The protein is Probable peptidoglycan glycosyltransferase FtsW of Saccharophagus degradans (strain 2-40 / ATCC 43961 / DSM 17024).